Here is a 343-residue protein sequence, read N- to C-terminus: Ketol-acid reductoisomerase (NADP(+)) (343 aa).

The 180-residue stretch at Thr-7–Thr-186 folds into the KARI N-terminal Rossmann domain. NADP(+)-binding positions include Tyr-30 to Gln-33, Arg-53, Ser-56, Ser-58, and Asp-88 to Gln-91. His-112 is a catalytic residue. NADP(+) is bound at residue Gly-138. The KARI C-terminal knotted domain occupies Ser-187–Gly-329. 4 residues coordinate Mg(2+): Asp-195, Glu-199, Glu-231, and Glu-235. Residue Ser-256 participates in substrate binding.

The protein belongs to the ketol-acid reductoisomerase family. Mg(2+) is required as a cofactor.

It carries out the reaction (2R)-2,3-dihydroxy-3-methylbutanoate + NADP(+) = (2S)-2-acetolactate + NADPH + H(+). The enzyme catalyses (2R,3R)-2,3-dihydroxy-3-methylpentanoate + NADP(+) = (S)-2-ethyl-2-hydroxy-3-oxobutanoate + NADPH + H(+). Its pathway is amino-acid biosynthesis; L-isoleucine biosynthesis; L-isoleucine from 2-oxobutanoate: step 2/4. It participates in amino-acid biosynthesis; L-valine biosynthesis; L-valine from pyruvate: step 2/4. Its function is as follows. Involved in the biosynthesis of branched-chain amino acids (BCAA). Catalyzes an alkyl-migration followed by a ketol-acid reduction of (S)-2-acetolactate (S2AL) to yield (R)-2,3-dihydroxy-isovalerate. In the isomerase reaction, S2AL is rearranged via a Mg-dependent methyl migration to produce 3-hydroxy-3-methyl-2-ketobutyrate (HMKB). In the reductase reaction, this 2-ketoacid undergoes a metal-dependent reduction by NADPH to yield (R)-2,3-dihydroxy-isovalerate. The protein is Ketol-acid reductoisomerase (NADP(+)) of Haloarcula marismortui (strain ATCC 43049 / DSM 3752 / JCM 8966 / VKM B-1809) (Halobacterium marismortui).